A 558-amino-acid polypeptide reads, in one-letter code: Formate--tetrahydrofolate ligase (558 aa).

66-73 (TPAGEGKT) contributes to the ATP binding site.

This sequence belongs to the formate--tetrahydrofolate ligase family.

The enzyme catalyses (6S)-5,6,7,8-tetrahydrofolate + formate + ATP = (6R)-10-formyltetrahydrofolate + ADP + phosphate. Its pathway is one-carbon metabolism; tetrahydrofolate interconversion. The polypeptide is Formate--tetrahydrofolate ligase (Neisseria meningitidis serogroup C (strain 053442)).